We begin with the raw amino-acid sequence, 138 residues long: Hexon-interlacing protein (138 aa).

The stretch at 100-127 (LLVLLAQLEALTQRLGELSKQVAQLREQ) forms a coiled coil.

The protein belongs to the adenoviridae hexon-interlacing protein family. Homotrimer. Interacts with hexon protein; this interaction tethers the hexons together. Self-interacts with adjacent proteins. Interacts with kinesin light chain KLC1; this interaction leads to capsid disruption at the nuclear pore complex during virus entry into host cell.

The protein localises to the virion. Its subcellular location is the host nucleus. Its function is as follows. Structural component of the virion that acts as a cement protein on the capsid exterior and forms triskelion structures consisting of three molecules that stabilize three hexon trimers at the center of each icosahedral facet and fixes the peripentonal hexons. Dispensable for assembly. During virus entry, recruits the anterograde motor kinesin-1 to the capsid docked at the nuclear pore complex thereby subjecting the docked capsid to a pulling force. The resulting tension leads to capsid disruption, dispersion of capsid fragments toward cell periphery and eventually viral DNA entry into the host nucleus. In Human adenovirus B serotype 7 (HAdV-7), this protein is Hexon-interlacing protein.